Here is a 244-residue protein sequence, read N- to C-terminus: Acetoacetate decarboxylase (244 aa).

Catalysis depends on Lys115, which acts as the Schiff-base intermediate with acetoacetate.

This sequence belongs to the ADC family.

It carries out the reaction acetoacetate + H(+) = acetone + CO2. Functionally, catalyzes the conversion of acetoacetate to acetone and carbon dioxide. This chain is Acetoacetate decarboxylase, found in Streptomyces nogalater.